The chain runs to 107 residues: Small leucine-rich protein 1 (107 aa).

2 helical membrane passes run 19 to 39 and 53 to 73; these read AALV…LAMS and FLFF…IAYF. The interval 85–107 is disordered; it reads SQNCDRQHNPKDGSSLYQRMKWT.

It is found in the membrane. This chain is Small leucine-rich protein 1 (SMLR1), found in Homo sapiens (Human).